Reading from the N-terminus, the 226-residue chain is UPF0173 metal-dependent hydrolase CHY_0920 (226 aa).

This sequence belongs to the UPF0173 family.

The polypeptide is UPF0173 metal-dependent hydrolase CHY_0920 (Carboxydothermus hydrogenoformans (strain ATCC BAA-161 / DSM 6008 / Z-2901)).